The primary structure comprises 136 residues: MLQPKRTKFRKVHKGRNRGIAAGTDVSFGTYGLKAIGRGRLTARQIEAARRAMTRAVKRQGKIWIRVFPDKPITEKPLEVRMGKGKGNVEYWVALIQPGKVLYEMDGVSEEIAREAFALAAAKLPIKTTFVTKTVM.

It belongs to the universal ribosomal protein uL16 family. In terms of assembly, part of the 50S ribosomal subunit.

Binds 23S rRNA and is also seen to make contacts with the A and possibly P site tRNAs. This is Large ribosomal subunit protein uL16 from Mannheimia succiniciproducens (strain KCTC 0769BP / MBEL55E).